A 768-amino-acid polypeptide reads, in one-letter code: Phosphoribosylformylglycinamidine synthase subunit PurL (768 aa).

H48 is an active-site residue. ATP is bound by residues Y51 and K90. E92 is a binding site for Mg(2+). Residues 93–96 (SHNH) and R115 contribute to the substrate site. H94 (proton acceptor) is an active-site residue. D116 lines the Mg(2+) pocket. Residue Q239 participates in substrate binding. D267 provides a ligand contact to Mg(2+). 311–313 (ESQ) is a binding site for substrate. ATP contacts are provided by D507 and G544. N545 is a Mg(2+) binding site. Substrate is bound at residue S547.

It belongs to the FGAMS family. In terms of assembly, monomer. Part of the FGAM synthase complex composed of 1 PurL, 1 PurQ and 2 PurS subunits.

It localises to the cytoplasm. It carries out the reaction N(2)-formyl-N(1)-(5-phospho-beta-D-ribosyl)glycinamide + L-glutamine + ATP + H2O = 2-formamido-N(1)-(5-O-phospho-beta-D-ribosyl)acetamidine + L-glutamate + ADP + phosphate + H(+). It participates in purine metabolism; IMP biosynthesis via de novo pathway; 5-amino-1-(5-phospho-D-ribosyl)imidazole from N(2)-formyl-N(1)-(5-phospho-D-ribosyl)glycinamide: step 1/2. Functionally, part of the phosphoribosylformylglycinamidine synthase complex involved in the purines biosynthetic pathway. Catalyzes the ATP-dependent conversion of formylglycinamide ribonucleotide (FGAR) and glutamine to yield formylglycinamidine ribonucleotide (FGAM) and glutamate. The FGAM synthase complex is composed of three subunits. PurQ produces an ammonia molecule by converting glutamine to glutamate. PurL transfers the ammonia molecule to FGAR to form FGAM in an ATP-dependent manner. PurS interacts with PurQ and PurL and is thought to assist in the transfer of the ammonia molecule from PurQ to PurL. This Parasynechococcus marenigrum (strain WH8102) protein is Phosphoribosylformylglycinamidine synthase subunit PurL.